We begin with the raw amino-acid sequence, 203 residues long: Akirin-2 (203 aa).

2 positions are modified to phosphoserine: serine 18 and serine 21. A Nuclear localization signal motif is present at residues 22–27 (PKRRRC). Serine 57 carries the post-translational modification Phosphoserine. The disordered stretch occupies residues 115–137 (PHAFLLSGPASPGTPSGTSSPLK). Low complexity predominate over residues 119-135 (LLSGPASPGTPSGTSSP). The SYVS motif motif lies at 200–203 (SYVS).

The protein belongs to the akirin family. In terms of assembly, homodimer. Interacts with IPO9; the interaction is direct. Associates with 20S and 26S proteasomes. Interacts with SMARCD1; promoting SWI/SNF complex recruitment. Interacts with NFKBIZ. Interacts with YWHAB. In terms of processing, polyubiquitinated. Polyubiquitination is dependent of UBR5 that extends pre-ubiquitinated AKIRIN2.

Its subcellular location is the nucleus. The protein localises to the cytoplasm. It is found in the membrane. In terms of biological role, molecular adapter that acts as a bridge between a variety of multiprotein complexes, and which is involved in embryonic development, immunity, myogenesis and brain development. Plays a key role in nuclear protein degradation by promoting import of proteasomes into the nucleus: directly binds to fully assembled 20S proteasomes at one end and to nuclear import receptor IPO9 at the other end, bridging them together and mediating the import of pre-assembled proteasome complexes through the nuclear pore. Involved in innate immunity by regulating the production of interleukin-6 (IL6) downstream of Toll-like receptor (TLR): acts by bridging the NF-kappa-B inhibitor NFKBIZ and the SWI/SNF complex, leading to promote induction of IL6. Also involved in adaptive immunity by promoting B-cell activation. Involved in brain development: required for the survival and proliferation of cerebral cortical progenitor cells. Involved in myogenesis: required for skeletal muscle formation and skeletal development, possibly by regulating expression of muscle differentiation factors. This chain is Akirin-2, found in Bos taurus (Bovine).